A 380-amino-acid chain; its full sequence is ATP phosphoribosyltransferase regulatory subunit (380 aa).

It belongs to the class-II aminoacyl-tRNA synthetase family. HisZ subfamily. As to quaternary structure, heteromultimer composed of HisG and HisZ subunits.

It is found in the cytoplasm. The protein operates within amino-acid biosynthesis; L-histidine biosynthesis; L-histidine from 5-phospho-alpha-D-ribose 1-diphosphate: step 1/9. Required for the first step of histidine biosynthesis. May allow the feedback regulation of ATP phosphoribosyltransferase activity by histidine. The polypeptide is ATP phosphoribosyltransferase regulatory subunit (Thermoanaerobacter pseudethanolicus (strain ATCC 33223 / 39E) (Clostridium thermohydrosulfuricum)).